We begin with the raw amino-acid sequence, 208 residues long: Protein-L-isoaspartate O-methyltransferase (208 aa).

Serine 59 is a catalytic residue.

This sequence belongs to the methyltransferase superfamily. L-isoaspartyl/D-aspartyl protein methyltransferase family.

The protein localises to the cytoplasm. The catalysed reaction is [protein]-L-isoaspartate + S-adenosyl-L-methionine = [protein]-L-isoaspartate alpha-methyl ester + S-adenosyl-L-homocysteine. In terms of biological role, catalyzes the methyl esterification of L-isoaspartyl residues in peptides and proteins that result from spontaneous decomposition of normal L-aspartyl and L-asparaginyl residues. It plays a role in the repair and/or degradation of damaged proteins. This is Protein-L-isoaspartate O-methyltransferase from Aliivibrio fischeri (strain MJ11) (Vibrio fischeri).